The sequence spans 355 residues: METPNTTEDYDTTTEFDYGDATPCQKVNERAFGAQLLPPLYSLVFVIGLVGNILVVLVLVQYKRLKNMTSIYLLNLAISDLLFLFTLPFWIDYKLKDDWVFGDAMCKILSGFYYTGLYSEIFFIILLTIDRYLAIVHAVFALRARTVTFGVITSIIIWALAILASMPGLYFSKTQWEFTHHTCSLHFPHESLREWKLFQALKLNLFGLVLPLLVMIICYTGIIKILLRRPNEKKSKAVRLIFVIMIIFFLFWTPYNLTILISVFQDFLFTHECEQSRHLDLAVQVTEVIAYTHCCVNPVIYAFVGERFRKYLRQLFHRRVAVHLVKWLPFLSVDRLERVSSTSPSTGEHELSAGF.

Residues 1–34 (METPNTTEDYDTTTEFDYGDATPCQKVNERAFGA) lie on the Extracellular side of the membrane. N-linked (GlcNAc...) asparagine glycosylation is present at asparagine 5. 2 cysteine pairs are disulfide-bonded: cysteine 24-cysteine 273 and cysteine 106-cysteine 183. Residues 35-60 (QLLPPLYSLVFVIGLVGNILVVLVLV) traverse the membrane as a helical segment. Topologically, residues 61–64 (QYKR) are cytoplasmic. The chain crosses the membrane as a helical span at residues 65 to 91 (LKNMTSIYLLNLAISDLLFLFTLPFWI). Residues 92–107 (DYKLKDDWVFGDAMCK) are Extracellular-facing. The helical transmembrane segment at 108–129 (ILSGFYYTGLYSEIFFIILLTI) threads the bilayer. Over 130 to 146 (DRYLAIVHAVFALRART) the chain is Cytoplasmic. The chain crosses the membrane as a helical span at residues 147-171 (VTFGVITSIIIWALAILASMPGLYF). Topologically, residues 172 to 197 (SKTQWEFTHHTCSLHFPHESLREWKL) are extracellular. The helical transmembrane segment at 198–223 (FQALKLNLFGLVLPLLVMIICYTGII) threads the bilayer. The Cytoplasmic segment spans residues 224–239 (KILLRRPNEKKSKAVR). Residues 240–264 (LIFVIMIIFFLFWTPYNLTILISVF) form a helical membrane-spanning segment. Residues 265–281 (QDFLFTHECEQSRHLDL) lie on the Extracellular side of the membrane. The helical transmembrane segment at 282-305 (AVQVTEVIAYTHCCVNPVIYAFVG) threads the bilayer. At 306–355 (ERFRKYLRQLFHRRVAVHLVKWLPFLSVDRLERVSSTSPSTGEHELSAGF) the chain is on the cytoplasmic side.

Belongs to the G-protein coupled receptor 1 family. Interacts with CREB3. Interacts with CCL3. Interacts with CCL15. Interacts with CCL23. Interacts with GNAI1. Interacts with PF4/CXCL4. Widely expressed in different hematopoietic cells.

The protein localises to the cell membrane. Its function is as follows. Chemokine receptor that plays a crucial role in regulating immune cell migration, inflammation, and immune responses. Contributes to the inflammatory response by recruiting immune cells, such as monocytes, macrophages, T-cells, and dendritic cells, to sites of inflammation for the clearance of pathogens and the resolution of tissue damage. When activated by its ligands including CCL3, CCL5-9, CCL13-16 and CCL23, triggers a signaling cascade within immune cells, leading to their migration towards the source of the chemokine. For example, mediates neutrophil migration after activation by CCL3 leading to the sequential release of TNF-alpha and leukotriene B4. Also mediates monocyte migration upon CXCL4 binding. Activation by CCL5 results in neuroinflammation through the ERK1/2 signaling pathway. The sequence is that of C-C chemokine receptor type 1 (CCR1) from Homo sapiens (Human).